The sequence spans 333 residues: Protein-methionine-sulfoxide reductase catalytic subunit MsrP (333 aa).

Positions 1–43 form a signal peptide, tat-type signal; it reads MHKHRKPTEADVTPESLFYQRRRVLKALGISAAALSLPLSAQA. Residues Asn-87, 90 to 91, Cys-145, Thr-180, Asn-232, Arg-237, and 248 to 250 each bind Mo-molybdopterin; these read YE and NIK.

It belongs to the MsrP family. Heterodimer of a catalytic subunit (MsrP) and a heme-binding subunit (MsrQ). The cofactor is Mo-molybdopterin. In terms of processing, predicted to be exported by the Tat system. The position of the signal peptide cleavage has not been experimentally proven.

The protein localises to the periplasm. The enzyme catalyses L-methionyl-[protein] + a quinone + H2O = L-methionyl-(S)-S-oxide-[protein] + a quinol. It catalyses the reaction L-methionyl-[protein] + a quinone + H2O = L-methionyl-(R)-S-oxide-[protein] + a quinol. In terms of biological role, part of the MsrPQ system that repairs oxidized periplasmic proteins containing methionine sulfoxide residues (Met-O), using respiratory chain electrons. Thus protects these proteins from oxidative-stress damage caused by reactive species of oxygen and chlorine generated by the host defense mechanisms. MsrPQ is essential for the maintenance of envelope integrity under bleach stress, rescuing a wide series of structurally unrelated periplasmic proteins from methionine oxidation. The catalytic subunit MsrP is non-stereospecific, being able to reduce both (R-) and (S-) diastereoisomers of methionine sulfoxide. This chain is Protein-methionine-sulfoxide reductase catalytic subunit MsrP, found in Pectobacterium atrosepticum (strain SCRI 1043 / ATCC BAA-672) (Erwinia carotovora subsp. atroseptica).